The primary structure comprises 316 residues: Phospho-N-acetylmuramoyl-pentapeptide-transferase (316 aa).

10 consecutive transmembrane segments (helical) span residues 5–25, 52–72, 76–96, 116–136, 145–165, 172–192, 195–212, 221–241, 244–264, and 296–316; these read IIFA…FFIP, TMGG…FSPW, LFIL…DDFL, FLLA…EIIV, LANF…NSVN, GLAA…ALFL, VTYG…LGFL, VFMG…VALL, LPLI…SVIL, and VVYS…YSLS.

It belongs to the glycosyltransferase 4 family. MraY subfamily. Mg(2+) serves as cofactor.

It localises to the cell membrane. The enzyme catalyses UDP-N-acetyl-alpha-D-muramoyl-L-alanyl-gamma-D-glutamyl-meso-2,6-diaminopimeloyl-D-alanyl-D-alanine + di-trans,octa-cis-undecaprenyl phosphate = di-trans,octa-cis-undecaprenyl diphospho-N-acetyl-alpha-D-muramoyl-L-alanyl-D-glutamyl-meso-2,6-diaminopimeloyl-D-alanyl-D-alanine + UMP. It functions in the pathway cell wall biogenesis; peptidoglycan biosynthesis. In terms of biological role, catalyzes the initial step of the lipid cycle reactions in the biosynthesis of the cell wall peptidoglycan: transfers peptidoglycan precursor phospho-MurNAc-pentapeptide from UDP-MurNAc-pentapeptide onto the lipid carrier undecaprenyl phosphate, yielding undecaprenyl-pyrophosphoryl-MurNAc-pentapeptide, known as lipid I. In Caldanaerobacter subterraneus subsp. tengcongensis (strain DSM 15242 / JCM 11007 / NBRC 100824 / MB4) (Thermoanaerobacter tengcongensis), this protein is Phospho-N-acetylmuramoyl-pentapeptide-transferase.